Consider the following 430-residue polypeptide: Serine--tRNA ligase (430 aa).

237 to 239 (TAE) contacts L-serine. Residue 268–270 (RSE) coordinates ATP. Glu-291 serves as a coordination point for L-serine. 355 to 358 (EISS) is a binding site for ATP. L-serine is bound at residue Ser-391.

The protein belongs to the class-II aminoacyl-tRNA synthetase family. Type-1 seryl-tRNA synthetase subfamily. Homodimer. The tRNA molecule binds across the dimer.

It localises to the cytoplasm. The catalysed reaction is tRNA(Ser) + L-serine + ATP = L-seryl-tRNA(Ser) + AMP + diphosphate + H(+). The enzyme catalyses tRNA(Sec) + L-serine + ATP = L-seryl-tRNA(Sec) + AMP + diphosphate + H(+). It functions in the pathway aminoacyl-tRNA biosynthesis; selenocysteinyl-tRNA(Sec) biosynthesis; L-seryl-tRNA(Sec) from L-serine and tRNA(Sec): step 1/1. Its function is as follows. Catalyzes the attachment of serine to tRNA(Ser). Is also able to aminoacylate tRNA(Sec) with serine, to form the misacylated tRNA L-seryl-tRNA(Sec), which will be further converted into selenocysteinyl-tRNA(Sec). In Salmonella schwarzengrund (strain CVM19633), this protein is Serine--tRNA ligase.